Here is a 198-residue protein sequence, read N- to C-terminus: UPF0314 protein Saro_1818 (198 aa).

The next 5 membrane-spanning stretches (helical) occupy residues 13-33 (GGSL…LGMG), 62-82 (WYSF…HIVW), 96-116 (LALA…PIII), 153-173 (APVL…LWAI), and 177-197 (LALN…WQGG).

This sequence belongs to the UPF0314 family.

The protein resides in the cell membrane. The polypeptide is UPF0314 protein Saro_1818 (Novosphingobium aromaticivorans (strain ATCC 700278 / DSM 12444 / CCUG 56034 / CIP 105152 / NBRC 16084 / F199)).